A 600-amino-acid polypeptide reads, in one-letter code: MPAVGDQHKLIANPFEEPQRRISEYTAQEIATLQSRLEKQLGPEYLSSRAGPSGQKVHYISSEKCIQLANEVFGFNGWSSSIQNIQVDFVDEHPQTLKINMGISVIMRVTLRDGTYHEDLGYGHIENCKGKAAAFEKAKKEATTDALKRALRQFGNVLGNCIYDKQYLAKVTKMKVEPTKFAEDNLHRHSDFVKKEPVEADIMKVDSVGAGARPPALGNEESFEDLLGELDEADFNMADEGHPDEVVLPQAVHNSLNDKPVHQQLTNLNPQAQQSRPLSRSGSTGSLNTRQQPQNSHQFTARAQSRPPQQQLNSNQSRPMGQPVNNSSNANTPNNPQNYTTPQKPAPAAPAPQAGAAVAPAPETVGFFSAKAVTQLPEEALASGQVAPKPGLAFNPHAESPSIRKTPGIDHTKSKPLARNGQHVPPAKTTETEAEPSTSLSRPAGAHAASRPVTMNEARSASGSFSRAGPPMGGNAGNMGKPNVVNPQLDHTRRIGAPGMSGFSSSPSTNRGQYRPLTMKRPAPVVGGGAGQTKDGNGDSATTTTIAANTTAGSATGGNAAPSAGNGGRVPLTDMSANASNATAAGAATSGPEVKRQRLA.

Residues 148–152 (KRALR) mediate DNA binding. Positions 268–319 (LNPQAQQSRPLSRSGSTGSLNTRQQPQNSHQFTARAQSRPPQQQLNSNQSRP) are enriched in polar residues. 2 disordered regions span residues 268-357 (LNPQ…AGAA) and 387-600 (APKP…QRLA). 2 stretches are compositionally biased toward low complexity: residues 325 to 343 (NNSSNANTPNNPQNYTTPQ) and 458 to 470 (ARSASGSFSRAGP). The span at 502 to 512 (GFSSSPSTNRG) shows a compositional bias: polar residues. Low complexity-rich tracts occupy residues 540–564 (SATTTTIAANTTAGSATGGNAAPSA) and 577–591 (ANASNATAAGAATSG).

The protein belongs to the RAD52 family. In terms of assembly, part of a complex that includes mei-3/rad51 and mus-11/rad52.

It is found in the nucleus. Involved in DNA double-strand break (DSB) repair and recombination. Promotes the annealing of complementary single-stranded DNA and by stimulation of the mei-3/rad51 recombinase. The sequence is that of DNA repair and recombination protein mus-11 (mus-11) from Neurospora crassa (strain ATCC 24698 / 74-OR23-1A / CBS 708.71 / DSM 1257 / FGSC 987).